The sequence spans 294 residues: Flavin-dependent thymidylate synthase (294 aa).

Residues 27–250 (GFIRVIDYMG…PFVYEAFEEY (224 aa)) form the ThyX domain. FAD is bound by residues T73, 96-98 (RHR), and E104. Residues 93–96 (QWIR), 104–108 (EYSAR), and R189 each bind dUMP. Residues 96–106 (RHRTASVNEYS) carry the ThyX motif motif. Residues 205–207 (NLH) and H211 each bind FAD. Residue R216 participates in dUMP binding. Catalysis depends on R216, which acts as the Involved in ionization of N3 of dUMP, leading to its activation.

Belongs to the thymidylate synthase ThyX family. In terms of assembly, homotetramer. FAD serves as cofactor.

The enzyme catalyses dUMP + (6R)-5,10-methylene-5,6,7,8-tetrahydrofolate + NADPH + H(+) = dTMP + (6S)-5,6,7,8-tetrahydrofolate + NADP(+). Its pathway is pyrimidine metabolism; dTTP biosynthesis. Catalyzes the reductive methylation of 2'-deoxyuridine-5'-monophosphate (dUMP) to 2'-deoxythymidine-5'-monophosphate (dTMP) while utilizing 5,10-methylenetetrahydrofolate (mTHF) as the methyl donor, and NADPH and FADH(2) as the reductant. This Rickettsia conorii (strain ATCC VR-613 / Malish 7) protein is Flavin-dependent thymidylate synthase.